Consider the following 59-residue polypeptide: uncharacterized protein (59 aa).

The N-terminal stretch at 1 to 21 (MYLFYVLLSSLFLSALIYVIG) is a signal peptide. Residues 22–24 (KSH) lie on the Extracellular side of the membrane. Residues 25 to 45 (PNLFMFISLFVNVVTILYLVF) traverse the membrane as a helical segment. Residues 46 to 59 (KDYGQYIIAKPINT) are Cytoplasmic-facing.

Its subcellular location is the host membrane. This is an uncharacterized protein from Acidianus convivator (ABV).